We begin with the raw amino-acid sequence, 613 residues long: Probable hydrolase clz13 (613 aa).

Positions 1–25 are cleaved as a signal peptide; the sequence is MCLLSMRFTVAILLVLLSHCGGSHA. N-linked (GlcNAc...) asparagine glycosylation is found at asparagine 61, asparagine 89, asparagine 286, asparagine 422, asparagine 456, asparagine 477, and asparagine 581.

This sequence belongs to the beta-lactamase family.

It participates in secondary metabolite biosynthesis. Functionally, probable hydrolase; part of the gene cluster that mediates the biosynthesis of squalestatin S1 (SQS1, also known as zaragozic acid A), a heavily oxidized fungal polyketide that offers potent cholesterol lowering activity by targeting squalene synthase (SS). SQS1 is composed of a 2,8-dioxobicyclic[3.2.1]octane-3,4,5-tricarboxyclic acid core that is connected to two lipophilic polyketide arms. These initial steps feature the priming of an unusual benzoic acid starter unit onto the highly reducing polyketide synthase clz14, followed by oxaloacetate extension and product release to generate a tricarboxylic acid containing product. The phenylalanine ammonia lyase (PAL) clz10 and the acyl-CoA ligase clz12 are involved in transforming phenylalanine into benzoyl-CoA. The citrate synthase-like protein clz17 is involved in connecting the C-alpha-carbons of the hexaketide chain and oxaloacetate to afford the tricarboxylic acid unit. The potential hydrolytic enzymes, clz11 and clz13, are in close proximity to pks2 and may participate in product release. On the other side, the tetraketide arm is synthesized by a the squalestatin tetraketide synthase clz2 and enzymatically esterified to the core in the last biosynthetic step, by the acetyltransferase clz6. The biosynthesis of the tetraketide must involve 3 rounds of chain extension. After the first and second rounds methyl-transfer occurs, and in all rounds of extension the ketoreductase and dehydratase are active. The enoyl reductase and C-MeT of clz2 are not active in the final round of extension. The acetyltransferase clz6 appears to have a broad substrate selectivity for its acyl CoA substrate, allowing the in vitro synthesis of novel squalestatins. The biosynthesis of SQS1 requires several oxidative steps likely performed by oxidoreductases clz3, clz15 and clz16. Finally, in support of the identification of the cluster as being responsible for SQS1 production, the cluster contains a gene encoding a putative squalene synthase (SS) clz20, suggesting a likely mechanism for self-resistance. This chain is Probable hydrolase clz13, found in Cochliobolus lunatus (Filamentous fungus).